The primary structure comprises 220 residues: Probable L-serine dehydratase, beta chain (220 aa).

In terms of domain architecture, ACT spans 148 to 220 (AILVVHNDKF…NIIQVTKIAD (73 aa)).

Belongs to the iron-sulfur dependent L-serine dehydratase family. Heterodimer of an alpha chain and a beta chain. [4Fe-4S] cluster serves as cofactor.

It carries out the reaction L-serine = pyruvate + NH4(+). It participates in carbohydrate biosynthesis; gluconeogenesis. This chain is Probable L-serine dehydratase, beta chain (sdaAB), found in Bacillus subtilis (strain 168).